The following is a 283-amino-acid chain: MLRVAVPNKGALSESATSILSEAGYRKRTDSRDLSVLDPENQVEFYFLRPKDIAVYVGSGELDLGITGRDLALDSGAPVQERLALGFGRSTFRYAAPAGREWKVEDLYDKRIATSYPNLVLSDLRRRGIEAEVIRLDGAVEISIQLGVADAIADVVGSGRTLRQHNLVAFGETLCDSEGVLVERVGADRDDRARNQLVARIQGVVFAQQYLMLDYDCPKELLDQAVQITPGLESPTVSPLADEGWVAVRALVPRGKGNSVMDRLADLGAKAILATDIRSCRAF.

It belongs to the ATP phosphoribosyltransferase family. Long subfamily. Mg(2+) is required as a cofactor.

It localises to the cytoplasm. The catalysed reaction is 1-(5-phospho-beta-D-ribosyl)-ATP + diphosphate = 5-phospho-alpha-D-ribose 1-diphosphate + ATP. It functions in the pathway amino-acid biosynthesis; L-histidine biosynthesis; L-histidine from 5-phospho-alpha-D-ribose 1-diphosphate: step 1/9. With respect to regulation, feedback inhibited by histidine. Catalyzes the condensation of ATP and 5-phosphoribose 1-diphosphate to form N'-(5'-phosphoribosyl)-ATP (PR-ATP). Has a crucial role in the pathway because the rate of histidine biosynthesis seems to be controlled primarily by regulation of HisG enzymatic activity. This chain is ATP phosphoribosyltransferase, found in Nocardia farcinica (strain IFM 10152).